The following is a 182-amino-acid chain: Hexose transport activator protein (182 aa).

Residues 46–65 form a disordered region; it reads GIWGPMEKKPGGVGKKKGSE.

Multicopy expression suppresses glucose-uptake defects in various yeast mutants. The protein is Hexose transport activator protein (AHT1) of Saccharomyces cerevisiae (strain ATCC 204508 / S288c) (Baker's yeast).